Consider the following 437-residue polypeptide: MASVAVDPQPSVVTRVVNLPLVSSTYDLMSSAYLSTKDQYPYLKSVCEMAENGVKTITSVAMTSALPIIQKLEPQIAVANTYACKGLDRIEERLPILNQPSTQIVANAKGAVTGAKDAVTTTVTGAKDSVASTITGVMDKTKGAVTGSVEKTKSVVSGSINTVLGSRMMQLVSSGVENALTKSELLVEQYLPLTEEELEKEAKKVEGFDLVQKPSYYVRLGSLSTKLHSRAYQQALSRVKEAKQKSQQTISQLHSTVHLIEFARKNVYSANQKIQDAQDKLYLSWVEWKRSIGYDDTDESHCAEHIESRTLAIARNLTQQLQTTCHTLLSNIQGVPQNIQDQAKHMGVMAGDIYSVFRNAASFKEVSDSLLTSSKGQLQKMKESLDDVMDYLVNNTPLNWLVGPFYPQLTESQNAQDQGAEMDKSSQETQRSEHKTH.

Ala2 carries the N-acetylalanine modification. Ser215 bears the Phosphoserine mark. Tyr232 carries the post-translational modification Phosphotyrosine. Residues 412–437 are disordered; sequence SQNAQDQGAEMDKSSQETQRSEHKTH. Residues 421–437 show a composition bias toward basic and acidic residues; the sequence is EMDKSSQETQRSEHKTH.

The protein belongs to the perilipin family. As to quaternary structure, interacts with IRGC. In terms of processing, acylated; primarily with C14, C16 and C18 fatty acids. Phosphorylation at Tyr-232 by isoform 1 of CHKA (CHKalpha2) promotes dissociation from lipid droplets: dissociation is followed by recruitment of autophagosome machinery to lipid droplets and subsequent lipid droplet lipolysis. Post-translationally, polyubiquitination of Nt-acetylatable A-PLIN2 by MARCHF6 lead to degradation by 26S proteasomes. In terms of tissue distribution, milk lipid globules.

The protein localises to the membrane. It is found in the lipid droplet. Functionally, structural component of lipid droplets, which is required for the formation and maintenance of lipid storage droplets. The polypeptide is Perilipin-2 (Homo sapiens (Human)).